The following is a 257-amino-acid chain: THAP domain-containing protein 10 (257 aa).

The THAP-type zinc finger occupies 1-90 (MPARCVAAHC…LVAGAVPTLH (90 aa)). Residues 154–168 (QPHADNPSNTVTSVP) are compositionally biased toward polar residues. Residues 154-178 (QPHADNPSNTVTSVPTHCEEGPVHK) are disordered.

The chain is THAP domain-containing protein 10 (THAP10) from Homo sapiens (Human).